Here is a 1897-residue protein sequence, read N- to C-terminus: 1,3-beta-glucan synthase component FKS1 (1897 aa).

The interval 1–106 (MSGYPAGHYE…SETFSDFTMR (106 aa)) is disordered. Residues 8–29 (HYEDGYGHQEHGGDAYYQDEHG) are compositionally biased toward basic and acidic residues. Low complexity predominate over residues 74–83 (GDQYYDQGNG). The next 17 membrane-spanning stretches (helical) occupy residues 487–507 (IWVI…PTLY), 525–545 (WSAV…ATLC), 564–584 (LMFL…VFGF), 591–611 (TICL…FFFF), 655–675 (LWIC…TLSL), 707–727 (ILLG…SYLW), 728–748 (YVIC…VSIW), 1329–1349 (NMFI…LGAL), 1386–1406 (CVVS…VQEL), 1473–1493 (FAGP…FATS), 1497–1517 (TPAL…PFLF), 1588–1608 (IFFS…VPYL), 1630–1650 (IAIV…MFFG), 1666–1686 (FGAV…LVIF), 1701–1721 (VLGM…IISL), 1766–1786 (FSAD…ALCI), and 1826–1846 (FAIL…APLV).

It belongs to the glycosyltransferase 48 family. In terms of assembly, component of the 1,3-beta-glucan synthase (GS) complex composed of a catalytic subunit fksA and a regulatory subunit.

Its subcellular location is the mitochondrion. The protein localises to the cell membrane. The catalysed reaction is [(1-&gt;3)-beta-D-glucosyl](n) + UDP-alpha-D-glucose = [(1-&gt;3)-beta-D-glucosyl](n+1) + UDP + H(+). In terms of biological role, catalytic subunit of the 1,3-beta-glucan synthase. Synthesizes 1,3-beta-glucan, a major structural component of the fungal cell wall. Involved in cell wall synthesis, maintenance and remodeling. In Aspergillus niger (strain ATCC MYA-4892 / CBS 513.88 / FGSC A1513), this protein is 1,3-beta-glucan synthase component FKS1.